Reading from the N-terminus, the 606-residue chain is NADH-ubiquinone oxidoreductase chain 5 (606 aa).

The next 16 membrane-spanning stretches (helical) occupy residues 1 to 21 (MNIF…PIIA), 38 to 58 (NIIS…IYSG), 87 to 107 (MIFV…SIWY), 114 to 134 (ITQF…LVTA), 140 to 160 (LFIG…WWYG), 171 to 191 (AILY…WFLS), 213 to 233 (LMGL…HPWL), 241 to 261 (TPVS…FLLI), 273 to 293 (AQTL…ICAL), 301 to 320 (IIAF…IGIN), 325 to 347 (AFLH…GSII), 366 to 386 (MPFT…MPFL), 409 to 429 (LLMT…MIFF), 457 to 477 (LLIG…PTTT), 488 to 508 (LMAL…SLAT), and 582 to 602 (GLIK…LLLL).

It belongs to the complex I subunit 5 family. As to quaternary structure, core subunit of respiratory chain NADH dehydrogenase (Complex I) which is composed of 45 different subunits.

The protein resides in the mitochondrion inner membrane. The enzyme catalyses a ubiquinone + NADH + 5 H(+)(in) = a ubiquinol + NAD(+) + 4 H(+)(out). Core subunit of the mitochondrial membrane respiratory chain NADH dehydrogenase (Complex I) which catalyzes electron transfer from NADH through the respiratory chain, using ubiquinone as an electron acceptor. Essential for the catalytic activity and assembly of complex I. In Rhinoceros unicornis (Greater Indian rhinoceros), this protein is NADH-ubiquinone oxidoreductase chain 5 (MT-ND5).